Here is a 385-residue protein sequence, read N- to C-terminus: UPF0284 protein P9301_04631 (385 aa).

This sequence belongs to the UPF0284 family.

This is UPF0284 protein P9301_04631 from Prochlorococcus marinus (strain MIT 9301).